A 232-amino-acid chain; its full sequence is Glutathione-specific gamma-glutamylcyclotransferase (232 aa).

A substrate-binding site is contributed by V10–S15. Residue E115 is the Proton acceptor of the active site.

Belongs to the gamma-glutamylcyclotransferase family. ChaC subfamily.

The protein resides in the cytoplasm. It is found in the nucleus. The catalysed reaction is glutathione = L-cysteinylglycine + 5-oxo-L-proline. Functionally, catalyzes the cleavage of glutathione into 5-oxo-L-proline and a Cys-Gly dipeptide. Acts specifically on glutathione, but not on other gamma-glutamyl peptides. Allows utilization of gluthathione through subsequent cleavage of the Cys-Gly dipeptide by Cys-Gly metallodipeptidase DUG1. The chain is Glutathione-specific gamma-glutamylcyclotransferase from Saccharomyces cerevisiae (strain ATCC 204508 / S288c) (Baker's yeast).